The primary structure comprises 336 residues: Protein SphX (336 aa).

The signal sequence occupies residues methionine 1 to serine 27.

Belongs to the PstS family.

Functionally, may be involved in the system for phosphate transport across the cytoplasmic membrane. This is Protein SphX (sphX) from Synechocystis sp. (strain ATCC 27184 / PCC 6803 / Kazusa).